The chain runs to 202 residues: Dephospho-CoA kinase (202 aa).

The DPCK domain maps to A3–A201. Residue G11 to T16 participates in ATP binding.

It belongs to the CoaE family.

It is found in the cytoplasm. It carries out the reaction 3'-dephospho-CoA + ATP = ADP + CoA + H(+). It functions in the pathway cofactor biosynthesis; coenzyme A biosynthesis; CoA from (R)-pantothenate: step 5/5. Catalyzes the phosphorylation of the 3'-hydroxyl group of dephosphocoenzyme A to form coenzyme A. The sequence is that of Dephospho-CoA kinase from Burkholderia lata (strain ATCC 17760 / DSM 23089 / LMG 22485 / NCIMB 9086 / R18194 / 383).